The chain runs to 2240 residues: Nonribisomal peptide synthetase notE (2240 aa).

The interval 22-52 is disordered; sequence TETMRETLSSSSSPLSLSSITSPLSSASEPP. Residues 28-52 are compositionally biased toward low complexity; the sequence is TLSSSSSPLSLSSITSPLSSASEPP. Residues 85-484 form an adenylation 1 region; it reads QQRCREAPES…GRKEGQVKIR (400 aa). A Carrier 1 domain is found at 616–692; it reads PPTTATEHAL…EQARKATPVS (77 aa). S653 is subject to O-(pantetheine 4'-phosphoryl)serine. The interval 732 to 1144 is condensation 1; that stretch reads EDIFPCTPLQ…DFASPQDRDL (413 aa). The interval 1167–1564 is adenylation 2; sequence QEARQPSREA…GRRDTQLKLR (398 aa). The 77-residue stretch at 1700–1776 folds into the Carrier 2 domain; the sequence is PVSRGPELRL…ELARCTGEEP (77 aa). An O-(pantetheine 4'-phosphoryl)serine modification is found at S1737. Residues 1845-2159 are condensation 2; that stretch reads FSFHGEVSVE…ILQHQNIDMD (315 aa). The interval 2008–2027 is disordered; sequence CTMPVKATPPTDSDDSRPSA.

The protein belongs to the NRP synthetase family.

The catalysed reaction is L-proline + L-tryptophan + 2 ATP = brevianamide F + 2 AMP + 2 diphosphate + 2 H(+). The protein operates within alkaloid biosynthesis. In terms of biological role, nonribisomal peptide synthetase; part of the gene cluster that mediates the biosynthesis of notoamide, a fungal indole alkaloid that belongs to a family of natural products containing a characteristic bicyclo[2.2.2]diazaoctane core. The first step of notoamide biosynthesis involves coupling of L-proline and L-tryptophan by the bimodular NRPS notE, to produce cyclo-L-tryptophan-L-proline called brevianamide F. The reverse prenyltransferase notF then acts as a deoxybrevianamide E synthase and converts brevianamide F to deoxybrevianamide E via reverse prenylation at C-2 of the indole ring leading to the bicyclo[2.2.2]diazaoctane core. Deoxybrevianamide E is further hydroxylated at C-6 of the indole ring, likely catalyzed by the cytochrome P450 monooxygenase notG, to yield 6-hydroxy-deoxybrevianamide E. 6-hydroxy-deoxybrevianamide E is a specific substrate of the prenyltransferase notC for normal prenylation at C-7 to produce 6-hydroxy-7-prenyl-deoxybrevianamide, also called notoamide S. As the proposed pivotal branching point in notoamide biosynthesis, notoamide S can be diverted to notoamide E through an oxidative pyran ring closure putatively catalyzed by either notH cytochrome P450 monooxygenase or the notD FAD-linked oxidoreductase. This step would be followed by an indole 2,3-epoxidation-initiated pinacol-like rearrangement catalyzed by the notB FAD-dependent monooxygenase leading to the formation of notoamide C and notoamide D. On the other hand notoamide S is converted to notoamide T by notH (or notD), a bifunctional oxidase that also functions as the intramolecular Diels-Alderase responsible for generation of (+)-notoamide T. To generate antipodal (-)-notoaminide T, notH' (or notD') in Aspergillus versicolor is expected to catalyze a Diels-Alder reaction leading to the opposite stereochemistry. The remaining oxidoreductase notD (or notH) likely catalyzes the oxidative pyran ring formation to yield (+)-stephacidin A. The FAD-dependent monooxygenase notI is highly similar to notB and is predicted to catalyze a similar conversion from (+)-stephacidin A to (-)-notoamide B via the 2,3-epoxidation of (+)-stephacidin A followed by a pinacol-type rearrangement. Finally, it remains unclear which enzyme could be responsible for the final hydroxylation steps leading to notoamide A and sclerotiamide. The sequence is that of Nonribisomal peptide synthetase notE from Aspergillus sp. (strain MF297-2).